A 413-amino-acid chain; its full sequence is Elongation factor 1-alpha (413 aa).

Positions 5–211 (KEHINLAFIG…DNLAAPEKPV (207 aa)) constitute a tr-type G domain. The tract at residues 14–21 (GHVDHGKS) is G1. 14 to 21 (GHVDHGKS) is a binding site for GTP. Residue serine 21 participates in Mg(2+) binding. Residues 60-64 (GVTID) form a G2 region. A G3 region spans residues 81-84 (DCPG). GTP is bound by residues 81-85 (DCPGH) and 136-139 (NKID). The segment at 136-139 (NKID) is G4. Residues 175 to 177 (SAF) form a G5 region.

This sequence belongs to the TRAFAC class translation factor GTPase superfamily. Classic translation factor GTPase family. EF-Tu/EF-1A subfamily.

The protein localises to the cytoplasm. It catalyses the reaction GTP + H2O = GDP + phosphate + H(+). In terms of biological role, GTP hydrolase that promotes the GTP-dependent binding of aminoacyl-tRNA to the A-site of ribosomes during protein biosynthesis. The chain is Elongation factor 1-alpha from Methanobrevibacter smithii (strain ATCC 35061 / DSM 861 / OCM 144 / PS).